Here is a 239-residue protein sequence, read N- to C-terminus: Riboflavin synthase (239 aa).

2 Lumazine-binding repeats span residues 1–105 and 106–205; these read MFTG…MGGH and VVQG…EKQI. 2,4-dihydroxypteridine-binding positions include 4–6, 54–56, 70–75, 109–111, K145, 154–156, and 170–175; these read GLV, CLT, GISPET, GHV, SLT, and SMVSYT.

As to quaternary structure, homotrimer.

It carries out the reaction 2 6,7-dimethyl-8-(1-D-ribityl)lumazine + H(+) = 5-amino-6-(D-ribitylamino)uracil + riboflavin. It functions in the pathway cofactor biosynthesis; riboflavin biosynthesis; riboflavin from 2-hydroxy-3-oxobutyl phosphate and 5-amino-6-(D-ribitylamino)uracil: step 2/2. In terms of biological role, catalyzes the dismutation of two molecules of 6,7-dimethyl-8-ribityllumazine, resulting in the formation of riboflavin and 5-amino-6-(D-ribitylamino)uracil. The polypeptide is Riboflavin synthase (RIB5) (Meyerozyma guilliermondii (strain ATCC 6260 / CBS 566 / DSM 6381 / JCM 1539 / NBRC 10279 / NRRL Y-324) (Yeast)).